Here is a 667-residue protein sequence, read N- to C-terminus: Protein OS-9 (667 aa).

The first 25 residues, 1 to 25, serve as a signal peptide directing secretion; sequence MAAETLLSSLLGLLLLGLLLPATLT. The region spanning 108 to 230 is the MRH domain; that stretch reads APCLLKTKDW…TIRTPRLCPH (123 aa). A disulfide bridge connects residues Cys110 and Cys123. Positions 117, 118, and 130 each coordinate a mannooligosaccharide derivative. Asn177 carries N-linked (GlcNAc...) asparagine glycosylation. 2 cysteine pairs are disulfide-bonded: Cys181-Cys216 and Cys196-Cys228. A mannooligosaccharide derivative contacts are provided by Asp182, Arg188, Glu212, and Tyr218. Disordered stretches follow at residues 262–450, 506–541, and 636–667; these read QADS…SDRE, EKQS…EHRV, and ERQR…EFDF. 3 stretches are compositionally biased toward basic and acidic residues: residues 263–279, 304–328, and 396–408; these read ADSK…RQDP, ENSK…KEET, and PSRE…KGDP. Residues 410 to 429 show a composition bias toward acidic residues; the sequence is QQNEVEEEEDDEDEDEDEDE. A compositionally biased stretch (basic and acidic residues) spans 430 to 450; that stretch reads RQLLGEFEKELEGILLPSDRE. A compositionally biased stretch (basic residues) spans 514 to 523; that stretch reads KKHRKRRVVP. Over residues 636–647 the composition is skewed to basic and acidic residues; it reads ERQRQKELESNY.

It belongs to the OS-9 family. Component of the HRD1 complex, which comprises at least SYNV1/HRD1, DERL1/2, FAM8A1, HERPUD1/HERP, OS9, SEL1L and UBE2J1. FAM8A1 is stabilized by interaction with SYNV1, which prevents its proteasomal degradation. OS9 and UBE2J1 recruitment to the complex may be mediated by SEL1L. Through this complex, may interact with ERLEC1 and HSPA5. Interacts (via C-terminus) with CPNE6 (via second C2 domain); this interaction occurs in a calcium-dependent manner in vitro. Interacts with CREB3. In terms of processing, intramolecular disulfide bonds.

Its subcellular location is the endoplasmic reticulum lumen. Lectin component of the HRD1 complex, which functions in endoplasmic reticulum (ER) quality control and ER-associated degradation (ERAD). Specifically recognizes and binds improperly folded glycoproteins as well as hyperglycosylated proteins, retain them in the ER, and transfers them to the ubiquitination machinery and promote their degradation. Possible targets include TRPV4 as well as hyperglycosylated HSP90B1. The sequence is that of Protein OS-9 (OS9) from Bos taurus (Bovine).